The primary structure comprises 156 residues: ATP synthase subunit b (156 aa).

Residues 11-31 (AIAFVLFVLFCMKYVWPPLMA) form a helical membrane-spanning segment.

Belongs to the ATPase B chain family. F-type ATPases have 2 components, F(1) - the catalytic core - and F(0) - the membrane proton channel. F(1) has five subunits: alpha(3), beta(3), gamma(1), delta(1), epsilon(1). F(0) has three main subunits: a(1), b(2) and c(10-14). The alpha and beta chains form an alternating ring which encloses part of the gamma chain. F(1) is attached to F(0) by a central stalk formed by the gamma and epsilon chains, while a peripheral stalk is formed by the delta and b chains.

It is found in the cell inner membrane. Its function is as follows. F(1)F(0) ATP synthase produces ATP from ADP in the presence of a proton or sodium gradient. F-type ATPases consist of two structural domains, F(1) containing the extramembraneous catalytic core and F(0) containing the membrane proton channel, linked together by a central stalk and a peripheral stalk. During catalysis, ATP synthesis in the catalytic domain of F(1) is coupled via a rotary mechanism of the central stalk subunits to proton translocation. In terms of biological role, component of the F(0) channel, it forms part of the peripheral stalk, linking F(1) to F(0). The polypeptide is ATP synthase subunit b (Citrobacter koseri (strain ATCC BAA-895 / CDC 4225-83 / SGSC4696)).